Reading from the N-terminus, the 650-residue chain is Chaperone protein DnaK (650 aa).

A Phosphothreonine; by autocatalysis modification is found at threonine 200. Residues 614–635 (AGAAGAAGAAEGAAHAGGAQQA) form a disordered region.

It belongs to the heat shock protein 70 family.

Acts as a chaperone. The sequence is that of Chaperone protein DnaK from Burkholderia lata (strain ATCC 17760 / DSM 23089 / LMG 22485 / NCIMB 9086 / R18194 / 383).